A 322-amino-acid polypeptide reads, in one-letter code: uncharacterized protein (322 aa).

The segment at 1–63 (MFKIRKRSVP…DEASSSDSHY (63 aa)) is disordered. Residues 34-49 (FVDDHGKPIAEYRDFP) are compositionally biased toward basic and acidic residues. The C3H1-type zinc-finger motif lies at 245-274 (WKVDRICTYYINRPDKCTRGDNCRFKHDDV). Positions 278 to 322 (HRQKEIQSSRNQSWHHRTSSHKYSSENSDHRGYRRHRSRSPHARQ) are disordered. The segment covering 309–322 (GYRRHRSRSPHARQ) has biased composition (basic residues).

This is an uncharacterized protein from Caenorhabditis elegans.